The sequence spans 217 residues: Meiotic expression up-regulated protein 29 (217 aa).

An N-terminal signal peptide occupies residues 1–21; that stretch reads MFVVKTAVLLFFALFIGNTYA. Over 22–133 the chain is Extracellular; it reads YTYSLDRIQA…SGVLLHRPWK (112 aa). The N-linked (GlcNAc...) asparagine glycan is linked to N84. Residues 134-154 form a helical membrane-spanning segment; it reads LFSLKPFTAAFVLLLAASYLA. The Cytoplasmic portion of the chain corresponds to 155–217; it reads TACFRMLGYL…VPVPVLDESV (63 aa).

The protein localises to the membrane. This Schizosaccharomyces pombe (strain 972 / ATCC 24843) (Fission yeast) protein is Meiotic expression up-regulated protein 29 (meu29).